Consider the following 368-residue polypeptide: tRNA(Met) cytidine acetate ligase (368 aa).

Residues 7-20 (IAEF…HKYL), Gly-96, Asn-152, and Arg-175 each bind ATP.

This sequence belongs to the TmcAL family.

The protein localises to the cytoplasm. It carries out the reaction cytidine(34) in elongator tRNA(Met) + acetate + ATP = N(4)-acetylcytidine(34) in elongator tRNA(Met) + AMP + diphosphate. Catalyzes the formation of N(4)-acetylcytidine (ac(4)C) at the wobble position of elongator tRNA(Met), using acetate and ATP as substrates. First activates an acetate ion to form acetyladenylate (Ac-AMP) and then transfers the acetyl group to tRNA to form ac(4)C34. The protein is tRNA(Met) cytidine acetate ligase of Streptococcus pyogenes serotype M3 (strain SSI-1).